Consider the following 195-residue polypeptide: Phosphoribosylglycinamide formyltransferase (195 aa).

12 to 14 (GSN) contributes to the N(1)-(5-phospho-beta-D-ribosyl)glycinamide binding site. Residues Lys65, 90 to 93 (MRLI), and Asn107 contribute to the (6R)-10-formyltetrahydrofolate site. His109 acts as the Proton donor in catalysis.

Belongs to the GART family.

It catalyses the reaction N(1)-(5-phospho-beta-D-ribosyl)glycinamide + (6R)-10-formyltetrahydrofolate = N(2)-formyl-N(1)-(5-phospho-beta-D-ribosyl)glycinamide + (6S)-5,6,7,8-tetrahydrofolate + H(+). It functions in the pathway purine metabolism; IMP biosynthesis via de novo pathway; N(2)-formyl-N(1)-(5-phospho-D-ribosyl)glycinamide from N(1)-(5-phospho-D-ribosyl)glycinamide (10-formyl THF route): step 1/1. Catalyzes the transfer of a formyl group from 10-formyltetrahydrofolate to 5-phospho-ribosyl-glycinamide (GAR), producing 5-phospho-ribosyl-N-formylglycinamide (FGAR) and tetrahydrofolate. This Bacillus subtilis (strain 168) protein is Phosphoribosylglycinamide formyltransferase.